The chain runs to 290 residues: Picrinine-N-methytransferase TMT4 (290 aa).

The tract at residues 71-80 (MLDVGCGIGG) is SAM motif I. The short motif at 133–139 (DGTFDVV) is the Vacuolar targeting signal element. An SAM motif II region spans residues 134-142 (GTFDVVFTI). Positions 161–170 (VAAPGAAIVI) are SAM motif III.

The protein belongs to the class I-like SAM-binding methyltransferase superfamily. gTMT family. As to quaternary structure, homodimer.

The protein localises to the vacuole membrane. It catalyses the reaction picrinine + S-adenosyl-L-methionine = ervincine + S-adenosyl-L-homocysteine + H(+). Its pathway is alkaloid biosynthesis; vindoline biosynthesis. Its function is as follows. S-adenosyl-L-methionine-dependent N-methyltransferase involved in the biosynthesis of biologically active monoterpenoid indole alkaloids (MIAs) natural products including vindoline. Catalyzes the conversion of picrinine to N-methylpicrinine (ervincine). This Catharanthus roseus (Madagascar periwinkle) protein is Picrinine-N-methytransferase TMT4.